The primary structure comprises 140 residues: uncharacterized protein (140 aa).

This is an uncharacterized protein from Spirochaeta aurantia.